The sequence spans 198 residues: UPF0098 protein PH1269 (198 aa).

This sequence belongs to the UPF0098 family.

This Pyrococcus horikoshii (strain ATCC 700860 / DSM 12428 / JCM 9974 / NBRC 100139 / OT-3) protein is UPF0098 protein PH1269.